A 266-amino-acid chain; its full sequence is UPF0354 protein lwe1624 (266 aa).

Belongs to the UPF0354 family.

The polypeptide is UPF0354 protein lwe1624 (Listeria welshimeri serovar 6b (strain ATCC 35897 / DSM 20650 / CCUG 15529 / CIP 8149 / NCTC 11857 / SLCC 5334 / V8)).